The chain runs to 354 residues: Protein RecA (354 aa).

78–85 (GPESSGKT) contributes to the ATP binding site.

This sequence belongs to the RecA family.

Its subcellular location is the cytoplasm. Its function is as follows. Can catalyze the hydrolysis of ATP in the presence of single-stranded DNA, the ATP-dependent uptake of single-stranded DNA by duplex DNA, and the ATP-dependent hybridization of homologous single-stranded DNAs. It interacts with LexA causing its activation and leading to its autocatalytic cleavage. In Zymomonas mobilis subsp. mobilis (strain ATCC 31821 / ZM4 / CP4), this protein is Protein RecA.